We begin with the raw amino-acid sequence, 592 residues long: V-type ATP synthase alpha chain 1 (592 aa).

233-240 serves as a coordination point for ATP; sequence GPFGSGKT.

This sequence belongs to the ATPase alpha/beta chains family.

The enzyme catalyses ATP + H2O + 4 H(+)(in) = ADP + phosphate + 5 H(+)(out). Functionally, produces ATP from ADP in the presence of a proton gradient across the membrane. The V-type alpha chain is a catalytic subunit. The chain is V-type ATP synthase alpha chain 1 from Clostridium tetani (strain Massachusetts / E88).